A 317-amino-acid chain; its full sequence is Probable deoxyhypusine synthase (317 aa).

The active-site Nucleophile is Lys-285.

The protein belongs to the deoxyhypusine synthase family. NAD(+) serves as cofactor.

It catalyses the reaction [eIF5A protein]-L-lysine + spermidine = [eIF5A protein]-deoxyhypusine + propane-1,3-diamine. It functions in the pathway protein modification; eIF5A hypusination. Its function is as follows. Catalyzes the NAD-dependent oxidative cleavage of spermidine and the subsequent transfer of the butylamine moiety of spermidine to the epsilon-amino group of a specific lysine residue of the eIF-5A precursor protein to form the intermediate deoxyhypusine residue. The protein is Probable deoxyhypusine synthase (dys) of Methanosarcina thermophila.